The chain runs to 401 residues: Acetate kinase (401 aa).

Position 7 (asparagine 7) interacts with Mg(2+). Residue lysine 14 participates in ATP binding. Arginine 92 provides a ligand contact to substrate. Aspartate 149 (proton donor/acceptor) is an active-site residue. ATP is bound by residues 209-213, 283-285, and 331-335; these read HLGNG, DAR, and GLGEN. Residue glutamate 385 participates in Mg(2+) binding.

Belongs to the acetokinase family. In terms of assembly, homodimer. Mg(2+) is required as a cofactor. It depends on Mn(2+) as a cofactor.

It is found in the cytoplasm. The catalysed reaction is acetate + ATP = acetyl phosphate + ADP. The protein operates within metabolic intermediate biosynthesis; acetyl-CoA biosynthesis; acetyl-CoA from acetate: step 1/2. Its function is as follows. Catalyzes the formation of acetyl phosphate from acetate and ATP. Can also catalyze the reverse reaction. The chain is Acetate kinase from Helicobacter pylori (strain Shi470).